The chain runs to 486 residues: Galactose-3-O-sulfotransferase 4 (486 aa).

The Cytoplasmic segment spans residues 1–18; it reads MGPLSPARTLRLWGPRSL. A helical; Signal-anchor for type II membrane protein membrane pass occupies residues 19-39; it reads GVALGVFMTIGFALQLLGGPF. Topologically, residues 40 to 486 are lumenal; that stretch reads QRRLPGLQLR…PLKTSRPLSP (447 aa). The N-linked (GlcNAc...) asparagine glycan is linked to Asn374.

This sequence belongs to the galactose-3-O-sulfotransferase family. Requires Mn(2+) as cofactor. In terms of tissue distribution, expressed mainly in placenta, thymus, testis, ovary, spinal cord, trachea and adrenal gland and at low levels in brain, lung, spleen, prostate, small intestine, colon, stomach thyroid and lymph node.

It localises to the golgi apparatus. Its subcellular location is the golgi stack membrane. Its pathway is protein modification; carbohydrate sulfation. In terms of biological role, catalyzes the transfer of sulfate to beta-1,3-linked galactose residues in O-linked glycoproteins. Good substrates include asialofetuin, Gal-beta-1,3-GalNAc and Gal-beta-1,3 (GlcNAc-beta-1,6)GalNAc. In Homo sapiens (Human), this protein is Galactose-3-O-sulfotransferase 4 (GAL3ST4).